A 669-amino-acid chain; its full sequence is Alpha-1,4-glucan:maltose-1-phosphate maltosyltransferase 2 (669 aa).

Residues K255, Q315, and D350 each coordinate alpha-maltose 1-phosphate. D385 functions as the Nucleophile in the catalytic mechanism. An alpha-maltose 1-phosphate-binding site is contributed by N386. The Proton donor role is filled by E414. Position 525–526 (525–526 (KY)) interacts with alpha-maltose 1-phosphate.

The protein belongs to the glycosyl hydrolase 13 family. GlgE subfamily. In terms of assembly, homodimer.

It carries out the reaction alpha-maltose 1-phosphate + [(1-&gt;4)-alpha-D-glucosyl](n) = [(1-&gt;4)-alpha-D-glucosyl](n+2) + phosphate. In terms of biological role, maltosyltransferase that uses maltose 1-phosphate (M1P) as the sugar donor to elongate linear or branched alpha-(1-&gt;4)-glucans. Maltooligosaccharides with a degree of polymerization (DP) superior or equal to 4 are efficient acceptors, with DP6 being optimal in the GlgE-catalyzed polymerization with M1P. Is probably involved in a branched alpha-glucan biosynthetic pathway from trehalose, together with TreS, Mak and GlgB. This chain is Alpha-1,4-glucan:maltose-1-phosphate maltosyltransferase 2 (glgE2), found in Streptomyces coelicolor (strain ATCC BAA-471 / A3(2) / M145).